Consider the following 152-residue polypeptide: Deoxyuridine 5'-triphosphate nucleotidohydrolase (152 aa).

Substrate is bound by residues 71 to 73 (RSG), Asn-84, 88 to 90 (LID), and Met-98.

The protein belongs to the dUTPase family. Mg(2+) serves as cofactor.

It carries out the reaction dUTP + H2O = dUMP + diphosphate + H(+). The protein operates within pyrimidine metabolism; dUMP biosynthesis; dUMP from dCTP (dUTP route): step 2/2. Its function is as follows. This enzyme is involved in nucleotide metabolism: it produces dUMP, the immediate precursor of thymidine nucleotides and it decreases the intracellular concentration of dUTP so that uracil cannot be incorporated into DNA. This is Deoxyuridine 5'-triphosphate nucleotidohydrolase from Shewanella baltica (strain OS185).